The sequence spans 357 residues: DNA replication and repair protein RecF (357 aa).

30-37 (GANGSGKT) is an ATP binding site.

Belongs to the RecF family.

The protein localises to the cytoplasm. Its function is as follows. The RecF protein is involved in DNA metabolism; it is required for DNA replication and normal SOS inducibility. RecF binds preferentially to single-stranded, linear DNA. It also seems to bind ATP. This chain is DNA replication and repair protein RecF, found in Salmonella agona (strain SL483).